A 202-amino-acid chain; its full sequence is MSEFEYPQGYGLIAGVDEVGRGPLVGAVVTAAVILDPNNPISGLADSKKLSEKKRLVLAAEIKEKALAWSLGRAEAEEIDELNILHATMLAMRRAVKSLKILPHLVLVDGNRVPELDMPAQAIIKGDGKVAEISAASILAKVARDQEMETLDKQFPQYEFAKHKGYPTKVHLEKLMRFGALPQHRRSFAPVRKAIEEFNRTQ.

The 190-residue stretch at 11 to 200 (GLIAGVDEVG…VRKAIEEFNR (190 aa)) folds into the RNase H type-2 domain. The a divalent metal cation site is built by aspartate 17, glutamate 18, and aspartate 109.

This sequence belongs to the RNase HII family. Mn(2+) serves as cofactor. It depends on Mg(2+) as a cofactor.

It is found in the cytoplasm. It carries out the reaction Endonucleolytic cleavage to 5'-phosphomonoester.. Functionally, endonuclease that specifically degrades the RNA of RNA-DNA hybrids. The protein is Ribonuclease HII of Actinobacillus succinogenes (strain ATCC 55618 / DSM 22257 / CCUG 43843 / 130Z).